A 263-amino-acid polypeptide reads, in one-letter code: Acyl-[acyl-carrier-protein]--UDP-N-acetylglucosamine O-acyltransferase (263 aa).

Belongs to the transferase hexapeptide repeat family. LpxA subfamily. In terms of assembly, homotrimer.

The protein resides in the cytoplasm. It carries out the reaction a (3R)-hydroxyacyl-[ACP] + UDP-N-acetyl-alpha-D-glucosamine = a UDP-3-O-[(3R)-3-hydroxyacyl]-N-acetyl-alpha-D-glucosamine + holo-[ACP]. Its pathway is glycolipid biosynthesis; lipid IV(A) biosynthesis; lipid IV(A) from (3R)-3-hydroxytetradecanoyl-[acyl-carrier-protein] and UDP-N-acetyl-alpha-D-glucosamine: step 1/6. Its function is as follows. Involved in the biosynthesis of lipid A, a phosphorylated glycolipid that anchors the lipopolysaccharide to the outer membrane of the cell. The polypeptide is Acyl-[acyl-carrier-protein]--UDP-N-acetylglucosamine O-acyltransferase (Campylobacter jejuni subsp. jejuni serotype O:23/36 (strain 81-176)).